The sequence spans 101 residues: MTRPLEQAVAAIVCTFQEYAGRCGDKYKICQSELKELLQKELPTWTPSEFRECDYNKFMSVLDTNKDCEVDFGEYVRSLASLCLYCHEYFKECPPEPPCPQ.

EF-hand domains lie at 12–47 (IVCTFQEYAGRCGDKYKICQSELKELLQKELPTWTP) and 50–85 (FRECDYNKFMSVLDTNKDCEVDFGEYVRSLASLCLY). Lys-26 is a Ca(2+) binding site. Cys-30 and Cys-68 are disulfide-bonded. Arg-51 bears the Citrulline; by PAD3 mark. Residues Asp-63, Asn-65, Asp-67, Glu-69, and Glu-74 each coordinate Ca(2+). Zn(2+) is bound by residues Cys-83, Cys-86, His-87, and Cys-93.

It belongs to the S-100 family. Homodimer and homotetramer for the citrullinated form. In terms of processing, more than half of the arginine residues undergo citrullination by PAD1 and PAD2. Arg-51 is specifically citrullinated by PAD3 and promotes tetramerization. As to expression, skin specific, specifically expressed in cuticle of pelage follicle.

It is found in the cytoplasm. In terms of biological role, binds both calcium and zinc. May be involved in calcium-dependent cuticle cell differentiation, hair shaft and hair cuticular barrier formation. The polypeptide is Protein S100-A3 (S100a3) (Mus musculus (Mouse)).